The chain runs to 144 residues: Maximins z/Hv (144 aa).

Residues 1-18 (MNFKYIVAVSFLIASGYA) form the signal peptide. Positions 19-43 (RSEENDVQSLSQREVLEEESLREIR) are excised as a propeptide. At asparagine 70 the chain carries Asparagine amide. The propeptide occupies 74–123 (TAEDHEVMKRLKAVMRDLDSLDHPEEASERETRGFNQEEIANLFTKKEKR). Isoleucine 143 carries the post-translational modification Isoleucine amide.

Belongs to the bombinin family. As to expression, expressed by the skin glands.

The protein localises to the secreted. Maximin-z shows antimicrobial activity against bacteria and against the fungus C.albicans. It has little hemolytic activity. Its function is as follows. Maximin-Hv shows antimicrobial activity against bacteria and against the fungus C.albicans. Shows strong hemolytic activity. The protein is Maximins z/Hv of Bombina maxima (Giant fire-bellied toad).